The sequence spans 72 residues: Large ribosomal subunit protein uL29 (72 aa).

It belongs to the universal ribosomal protein uL29 family.

The protein is Large ribosomal subunit protein uL29 of Caldicellulosiruptor bescii (strain ATCC BAA-1888 / DSM 6725 / KCTC 15123 / Z-1320) (Anaerocellum thermophilum).